A 388-amino-acid chain; its full sequence is Chorismate synthase (388 aa).

R39 and R45 together coordinate NADP(+). FMN-binding positions include 132–134 (RSS), 251–252 (NA), G296, 311–315 (KPIPT), and R337.

This sequence belongs to the chorismate synthase family. Homotetramer. Requires FMNH2 as cofactor.

It catalyses the reaction 5-O-(1-carboxyvinyl)-3-phosphoshikimate = chorismate + phosphate. Its pathway is metabolic intermediate biosynthesis; chorismate biosynthesis; chorismate from D-erythrose 4-phosphate and phosphoenolpyruvate: step 7/7. In terms of biological role, catalyzes the anti-1,4-elimination of the C-3 phosphate and the C-6 proR hydrogen from 5-enolpyruvylshikimate-3-phosphate (EPSP) to yield chorismate, which is the branch point compound that serves as the starting substrate for the three terminal pathways of aromatic amino acid biosynthesis. This reaction introduces a second double bond into the aromatic ring system. This Staphylococcus epidermidis (strain ATCC 35984 / DSM 28319 / BCRC 17069 / CCUG 31568 / BM 3577 / RP62A) protein is Chorismate synthase.